We begin with the raw amino-acid sequence, 214 residues long: tRNA (guanine-N(7)-)-methyltransferase (214 aa).

S-adenosyl-L-methionine-binding residues include E43, E68, D95, and D117. The active site involves D117. Substrate contacts are provided by residues K121, D153, and 190 to 193 (TEYE).

It belongs to the class I-like SAM-binding methyltransferase superfamily. TrmB family.

It catalyses the reaction guanosine(46) in tRNA + S-adenosyl-L-methionine = N(7)-methylguanosine(46) in tRNA + S-adenosyl-L-homocysteine. Its pathway is tRNA modification; N(7)-methylguanine-tRNA biosynthesis. Catalyzes the formation of N(7)-methylguanine at position 46 (m7G46) in tRNA. The polypeptide is tRNA (guanine-N(7)-)-methyltransferase (Staphylococcus aureus (strain MSSA476)).